We begin with the raw amino-acid sequence, 514 residues long: Putative exoglucanase type C (514 aa).

An N-terminal signal peptide occupies residues 1-17; it reads MYRIVATASALIAAARA. The catalytic stretch occupies residues 18–439; it reads QQVCSLNTET…RDVPNSKVSF (422 aa). Glutamate 229 acts as the Nucleophile in catalysis. The active-site Proton donor is the glutamate 234. N-linked (GlcNAc...) asparagine glycosylation occurs at asparagine 287. Over residues 408–424 the composition is skewed to polar residues; the sequence is STKVGSQRGSCATTSGK. Disordered stretches follow at residues 408 to 433 and 448 to 485; these read STKVGSQRGSCATTSGKPSDLERDVP and GSTYKSDGTTPNPPASSSTTGSSTPTNPPAGSVDQWGQ. Residues 440–482 are linker; that stretch reads SNIKFGPIGSTYKSDGTTPNPPASSSTTGSSTPTNPPAGSVDQ. The span at 462–479 shows a compositional bias: low complexity; the sequence is ASSSTTGSSTPTNPPAGS. A CBM1 domain is found at 478 to 514; the sequence is GSVDQWGQCGGQNYSGPTTCKSPFTCKKINDFYSQCQ. Intrachain disulfides connect cysteine 486–cysteine 503 and cysteine 497–cysteine 513. Asparagine 490 is a glycosylation site (N-linked (GlcNAc...) asparagine).

Belongs to the glycosyl hydrolase 7 (cellulase C) family.

It catalyses the reaction Hydrolysis of (1-&gt;4)-beta-D-glucosidic linkages in cellulose and cellotetraose, releasing cellobiose from the non-reducing ends of the chains.. The protein is Putative exoglucanase type C of Fusarium oxysporum (Fusarium vascular wilt).